The sequence spans 170 residues: MDALKPFLPEAKGVLPYYMIILSIISIGNSLQAYTTLHFSRRVYNGRFIRNPKLPSKTNNFEPEDQTNKLIPAQNDPKATDQLTPLAGRLFGTWTLITCIVRCYAAYNLHIGPVYTLAYWTYIVAFSHFASELFVFKTMTFGLPQYFPFALASTSLIWMPLVRDHYVQYN.

Transmembrane regions (helical) follow at residues 7-27 (FLPE…IISI), 116-136 (TLAY…LFVF), and 141-161 (FGLP…WMPL).

This sequence belongs to the ERG28 family. Heterotetramer of ERG25, ERG26, ERG27 and ERG28. ERG28 acts as a scaffold to tether ERG27 and other 4,4-demethylation-related enzymes, forming a demethylation enzyme complex, in the endoplasmic reticulum.

It is found in the endoplasmic reticulum membrane. The protein operates within steroid metabolism; ergosterol biosynthesis. Functionally, sterol 24-C-methyltransferase; part of the third module of ergosterol biosynthesis pathway that includes the late steps of the pathway. ERG28 has a role as a scaffold to help anchor the catalytic components of the C-4 demethylation complex ERG25, ERG26 and ERG27 to the endoplasmic reticulum. The third module or late pathway involves the ergosterol synthesis itself through consecutive reactions that mainly occur in the endoplasmic reticulum (ER) membrane. Firstly, the squalene synthase ERG9 catalyzes the condensation of 2 farnesyl pyrophosphate moieties to form squalene, which is the precursor of all steroids. Squalene synthase is crucial for balancing the incorporation of farnesyl diphosphate (FPP) into sterol and nonsterol isoprene synthesis. Secondly, squalene is converted into lanosterol by the consecutive action of the squalene epoxidase ERG1 and the lanosterol synthase ERG7. Then, the delta(24)-sterol C-methyltransferase ERG6 methylates lanosterol at C-24 to produce eburicol. Eburicol is the substrate of the sterol 14-alpha demethylase encoded by CYP51A, CYP51B and CYP51C, to yield 4,4,24-trimethyl ergosta-8,14,24(28)-trienol. CYP51B encodes the enzyme primarily responsible for sterol 14-alpha-demethylation, and plays an essential role in ascospore formation. CYP51A encodes an additional sterol 14-alpha-demethylase, induced on ergosterol depletion and responsible for the intrinsic variation in azole sensitivity. The third CYP51 isoform, CYP51C, does not encode a sterol 14-alpha-demethylase, but is required for full virulence on host wheat ears. The C-14 reductase ERG24 then reduces the C14=C15 double bond which leads to 4,4-dimethylfecosterol. A sequence of further demethylations at C-4, involving the C-4 demethylation complex containing the C-4 methylsterol oxidases ERG25, the sterol-4-alpha-carboxylate 3-dehydrogenase ERG26 and the 3-keto-steroid reductase ERG27, leads to the production of fecosterol via 4-methylfecosterol. ERG28 has a role as a scaffold to help anchor ERG25, ERG26 and ERG27 to the endoplasmic reticulum. The C-8 sterol isomerase ERG2 then catalyzes the reaction which results in unsaturation at C-7 in the B ring of sterols and thus converts fecosterol to episterol. The sterol-C5-desaturases ERG3A and ERG3BB then catalyze the introduction of a C-5 double bond in the B ring to produce 5-dehydroepisterol. The C-22 sterol desaturases ERG5A and ERG5B further convert 5-dehydroepisterol into ergosta-5,7,22,24(28)-tetraen-3beta-ol by forming the C-22(23) double bond in the sterol side chain. Finally, ergosta-5,7,22,24(28)-tetraen-3beta-ol is substrate of the C-24(28) sterol reductase ERG4 to produce ergosterol. The polypeptide is Ergosterol biosynthetic protein 28 (Gibberella zeae (strain ATCC MYA-4620 / CBS 123657 / FGSC 9075 / NRRL 31084 / PH-1) (Wheat head blight fungus)).